The following is a 1171-amino-acid chain: Pyruvate-flavodoxin oxidoreductase (1171 aa).

4Fe-4S ferredoxin-type domains follow at residues 682-711 (EVPVWQPEGCTQCNQCAFICPHAAIRPALL) and 736-767 (YHLAISPLDCSGCGNCVDICPARGKALKMQSL). Residues Cys-691, Cys-694, Cys-697, Cys-701, Cys-745, Cys-748, Cys-751, Cys-755, Cys-811, Cys-814, Cys-839, and Cys-1072 each coordinate [4Fe-4S] cluster.

Belongs to the pyruvate:ferredoxin/flavodoxin oxidoreductase family. [4Fe-4S] cluster serves as cofactor.

It carries out the reaction oxidized [flavodoxin] + pyruvate + CoA + 2 H(+) = reduced [flavodoxin] + acetyl-CoA + CO2. Oxidoreductase required for the transfer of electrons from pyruvate to flavodoxin, which reduces nitrogenase. The polypeptide is Pyruvate-flavodoxin oxidoreductase (nifJ) (Klebsiella pneumoniae).